The primary structure comprises 447 residues: GTPase Der (447 aa).

2 consecutive EngA-type G domains span residues 4-165 and 180-357; these read QIIT…PEEE and LQIV…KIWN. GTP contacts are provided by residues 10-17, 57-61, 119-122, 186-193, 233-237, and 298-301; these read GRPNVGKS, DTPGL, NKCE, GRPNAGKS, DTAGL, and NKWD. The KH-like domain occupies 358 to 443; that stretch reads KKITTSKLNE…PIRFTYVKTK (86 aa).

It belongs to the TRAFAC class TrmE-Era-EngA-EngB-Septin-like GTPase superfamily. EngA (Der) GTPase family. Associates with the 50S ribosomal subunit.

GTPase that plays an essential role in the late steps of ribosome biogenesis. In Rickettsia rickettsii (strain Sheila Smith), this protein is GTPase Der.